We begin with the raw amino-acid sequence, 268 residues long: Interleukin-2 receptor subunit alpha (268 aa).

An N-terminal signal peptide occupies residues Met1–Thr21. The region spanning Asp22 to Ser81 is the Sushi 1 domain. Residues Asp22 to Gln237 are Extracellular-facing. 3 disulfide bridges follow: Cys24-Cys64, Cys49-Cys77, and Cys51-Cys79. The N-linked (GlcNAc...) asparagine glycan is linked to Asn67. The tract at residues Ser83 to Pro112 is disordered. Positions Glu85 to Asn102 are enriched in basic and acidic residues. Residues Gly120–Ser183 form the Sushi 2 domain. Intrachain disulfides connect Cys122-Cys165 and Cys149-Cys181. Residues Gln186–Ser213 are disordered. Residues Asp204–Ser213 are compositionally biased toward polar residues. The helical transmembrane segment at Ile238–Trp258 threads the bilayer. Residues Gln259–Ile268 lie on the Cytoplasmic side of the membrane.

Non-covalent dimer of an alpha and a beta subunit. IL2R exists in 3 different forms: a high affinity dimer, an intermediate affinity monomer (beta subunit), and a low affinity monomer (alpha subunit). The high and intermediate affinity forms also associate with a gamma subunit.

It is found in the membrane. Functionally, receptor for interleukin-2. The receptor is involved in the regulation of immune tolerance by controlling regulatory T cells (TREGs) activity. TREGs suppress the activation and expansion of autoreactive T-cells. The sequence is that of Interleukin-2 receptor subunit alpha (IL2RA) from Canis lupus familiaris (Dog).